A 478-amino-acid polypeptide reads, in one-letter code: uncharacterized protein (478 aa).

The region spanning 174–366 (RQVLAAAGVP…LIGEHIKLAI (193 aa)) is the ATP-grasp domain. 214–219 (GSGSRG) is an ATP binding site. Arg339 is an active-site residue.

This is an uncharacterized protein from Sinorhizobium fredii (strain NBRC 101917 / NGR234).